The primary structure comprises 217 residues: Thiopurine S-methyltransferase (217 aa).

Trp-10, Leu-45, Glu-66, and Arg-127 together coordinate S-adenosyl-L-methionine.

Belongs to the class I-like SAM-binding methyltransferase superfamily. TPMT family.

Its subcellular location is the cytoplasm. The enzyme catalyses S-adenosyl-L-methionine + a thiopurine = S-adenosyl-L-homocysteine + a thiopurine S-methylether.. The polypeptide is Thiopurine S-methyltransferase (Acinetobacter baylyi (strain ATCC 33305 / BD413 / ADP1)).